Reading from the N-terminus, the 111-residue chain is Ig heavy chain V-III region HPC76 (111 aa).

In terms of domain architecture, Ig-like spans 1–110 (ESGGGLVQPG…WGQGTTLTVS (110 aa)).

The protein is Ig heavy chain V-III region HPC76 of Mus musculus (Mouse).